The primary structure comprises 282 residues: Phosphatidylglycerol--prolipoprotein diacylglyceryl transferase (282 aa).

Helical transmembrane passes span 18–38, 55–75, and 89–109; these read LSIK…YFIA, VIFY…VIFQ, and IWHG…TGII. Arg137 is an a 1,2-diacyl-sn-glycero-3-phospho-(1'-sn-glycerol) binding site. 2 consecutive transmembrane segments (helical) span residues 203–223 and 235–255; these read VGET…FVEG and IRVA…ILIY.

Belongs to the Lgt family.

It is found in the cell membrane. The catalysed reaction is L-cysteinyl-[prolipoprotein] + a 1,2-diacyl-sn-glycero-3-phospho-(1'-sn-glycerol) = an S-1,2-diacyl-sn-glyceryl-L-cysteinyl-[prolipoprotein] + sn-glycerol 1-phosphate + H(+). It functions in the pathway protein modification; lipoprotein biosynthesis (diacylglyceryl transfer). In terms of biological role, catalyzes the transfer of the diacylglyceryl group from phosphatidylglycerol to the sulfhydryl group of the N-terminal cysteine of a prolipoprotein, the first step in the formation of mature lipoproteins. In Staphylococcus haemolyticus (strain JCSC1435), this protein is Phosphatidylglycerol--prolipoprotein diacylglyceryl transferase.